A 396-amino-acid polypeptide reads, in one-letter code: tRNA (guanine-N(7)-)-methyltransferase non-catalytic subunit wuho (396 aa).

4 WD repeats span residues 75 to 115 (KVEV…AQLL), 162 to 201 (GHLS…DIHS), 205 to 243 (GHKE…ELLL), and 302 to 342 (AGTW…RASG).

Belongs to the WD repeat TRM82 family. In terms of assembly, forms a heterodimer with the catalytic subunit Mettl1. Interacts with mei-P26 and weakly interacts with bgcn; required for the function or formation of the mei-P26-bgcn-bam-sxl complex. Interacts with nanos; may be involved in mei-P26-dependent derepression of the BMP signaling pathway. Interacts with Myc; the interaction may be mediated by mei-P26 and may be involved in the regulation of ribosome biogenesis. In testis, it is present at high level in hub cells, a niche for germline stem cells of testis. Ubiquitously expressed in all testicular cells throughout spermatogenesis. Ubiquitously expressed in all germline and somatic cells of the ovary.

The protein resides in the nucleus. It is found in the cytoplasm. It functions in the pathway tRNA modification; N(7)-methylguanine-tRNA biosynthesis. Functionally, required for the Mettl1-dependent formation of N(7)-methylguanine at position 46 (m7G46) in tRNA. In the Mettl1-wuho methyltransferase complex, it is required to stabilize and induce conformational changes of the catalytic subunit. Required for binding of nanos mRNA and repression of translation by the mei-P26-bgcn-bam-sxl complex. May cooperate with mei-P26 and nanos to derepress the BMP signaling pathway. May cooperate with mei-P26 to suppress expression of a subset of microRNAs. May cooperate with mei-P26 to regulate bam expression levels in germline cells during gametogenesis. Required to promote mitosis to meiosis transition during gametogenesis. May regulate germline cell division in part by regulating ribosome biogenesis. This is tRNA (guanine-N(7)-)-methyltransferase non-catalytic subunit wuho from Drosophila pseudoobscura pseudoobscura (Fruit fly).